The chain runs to 475 residues: Aspartyl/glutamyl-tRNA(Asn/Gln) amidotransferase subunit B (475 aa).

It belongs to the GatB/GatE family. GatB subfamily. As to quaternary structure, heterotrimer of A, B and C subunits.

The catalysed reaction is L-glutamyl-tRNA(Gln) + L-glutamine + ATP + H2O = L-glutaminyl-tRNA(Gln) + L-glutamate + ADP + phosphate + H(+). The enzyme catalyses L-aspartyl-tRNA(Asn) + L-glutamine + ATP + H2O = L-asparaginyl-tRNA(Asn) + L-glutamate + ADP + phosphate + 2 H(+). In terms of biological role, allows the formation of correctly charged Asn-tRNA(Asn) or Gln-tRNA(Gln) through the transamidation of misacylated Asp-tRNA(Asn) or Glu-tRNA(Gln) in organisms which lack either or both of asparaginyl-tRNA or glutaminyl-tRNA synthetases. The reaction takes place in the presence of glutamine and ATP through an activated phospho-Asp-tRNA(Asn) or phospho-Glu-tRNA(Gln). This chain is Aspartyl/glutamyl-tRNA(Asn/Gln) amidotransferase subunit B, found in Macrococcus caseolyticus (strain JCSC5402) (Macrococcoides caseolyticum).